We begin with the raw amino-acid sequence, 1543 residues long: Rho guanine nucleotide exchange factor 12 (1543 aa).

A disordered region spans residues M1–R62. S2 is subject to N-acetylserine. Positions S28–D45 are enriched in basic and acidic residues. S41 carries the post-translational modification Phosphoserine. Residues C72–S151 form the PDZ domain. A coiled-coil region spans residues V194 to D262. A disordered region spans residues A281–D355. Low complexity predominate over residues D293–S312. S309 is modified (phosphoserine). Over residues S313–G329 the composition is skewed to basic and acidic residues. S341 is modified (phosphoserine). The region spanning G367–K558 is the RGSL domain. Positions F574–V710 are disordered. Over residues M582–G592 the composition is skewed to basic and acidic residues. At S637 the chain carries Phosphoserine. Residues A663–S676 show a composition bias toward low complexity. At T736 the chain carries Phosphothreonine. Positions K787–A977 constitute a DH domain. Residues A981–Y1004 adopt a coiled-coil conformation. The PH domain occupies K1019 to A1132. The interval Q1137–E1158 is disordered. Phosphoserine is present on residues S1288, S1327, and S1377. Disordered stretches follow at residues E1386 to K1405 and P1441 to S1468. A compositionally biased stretch (polar residues) spans S1450–N1460. A phosphoserine mark is found at S1457 and S1540.

Interacts with GNA12 and GNA13, probably through the RGS-like domain, with RHOA, PLXNB1 and PLXNB2, and through its PDZ domain with IGF1R beta subunit. Interacts with GCSAM. Found in a complex with ARHGEF11 and ARHGEF12; binding to ARHGEF11 and ARHGEF12 enhances CDC42 GEF activity of PLEKHG4B, and PLEKHG4B, in turn, inhibits ARHGEF11- and ARHGEF12-mediated RHOA activation. In terms of tissue distribution, expressed in brain, predominantly in neuronal cell bodies.

It localises to the cytoplasm. The protein resides in the membrane. May play a role in the regulation of RhoA GTPase by guanine nucleotide-binding alpha-12 (GNA12) and alpha-13 (GNA13). Acts as guanine nucleotide exchange factor (GEF) for RhoA GTPase and may act as GTPase-activating protein (GAP) for GNA12 and GNA13. In Mus musculus (Mouse), this protein is Rho guanine nucleotide exchange factor 12 (Arhgef12).